Consider the following 356-residue polypeptide: tRNA (guanine(26)-N(2))-dimethyltransferase (356 aa).

The 348-residue stretch at 5–352 (VLRREGTVEF…VSAGEVERVL (348 aa)) folds into the Trm1 methyltransferase domain. S-adenosyl-L-methionine-binding residues include R40, R67, D85, D111, and A112.

Belongs to the class I-like SAM-binding methyltransferase superfamily. Trm1 family.

The catalysed reaction is guanosine(26) in tRNA + 2 S-adenosyl-L-methionine = N(2)-dimethylguanosine(26) in tRNA + 2 S-adenosyl-L-homocysteine + 2 H(+). Its function is as follows. Dimethylates a single guanine residue at position 26 of a number of tRNAs using S-adenosyl-L-methionine as donor of the methyl groups. The protein is tRNA (guanine(26)-N(2))-dimethyltransferase of Pyrobaculum arsenaticum (strain DSM 13514 / JCM 11321 / PZ6).